A 311-amino-acid chain; its full sequence is HPr kinase/phosphorylase (311 aa).

Active-site residues include H140 and K161. Residue 155–162 (GDSGIGKS) coordinates ATP. S162 is a Mg(2+) binding site. The Proton acceptor; for phosphorylation activity. Proton donor; for dephosphorylation activity role is filled by D179. Residues 203–212 (IEIRGIGIID) are important for the catalytic mechanism of both phosphorylation and dephosphorylation. E204 contributes to the Mg(2+) binding site. R245 is an active-site residue. Positions 266-271 (PVKTGR) are important for the catalytic mechanism of dephosphorylation.

It belongs to the HPrK/P family. As to quaternary structure, homohexamer. Mg(2+) serves as cofactor.

It carries out the reaction [HPr protein]-L-serine + ATP = [HPr protein]-O-phospho-L-serine + ADP + H(+). The enzyme catalyses [HPr protein]-O-phospho-L-serine + phosphate + H(+) = [HPr protein]-L-serine + diphosphate. In terms of biological role, catalyzes the ATP- as well as the pyrophosphate-dependent phosphorylation of a specific serine residue in HPr, a phosphocarrier protein of the phosphoenolpyruvate-dependent sugar phosphotransferase system (PTS). HprK/P also catalyzes the pyrophosphate-producing, inorganic phosphate-dependent dephosphorylation (phosphorolysis) of seryl-phosphorylated HPr (P-Ser-HPr). The two antagonistic activities of HprK/P are regulated by several intracellular metabolites, which change their concentration in response to the absence or presence of rapidly metabolisable carbon sources (glucose, fructose, etc.) in the growth medium. Therefore, by controlling the phosphorylation state of HPr, HPrK/P is a sensor enzyme that plays a major role in the regulation of carbon metabolism and sugar transport: it mediates carbon catabolite repression (CCR), and regulates PTS-catalyzed carbohydrate uptake and inducer exclusion. The sequence is that of HPr kinase/phosphorylase (hprK) from Enterococcus faecalis (strain ATCC 700802 / V583).